The sequence spans 624 residues: Chaperone protein HtpG (624 aa).

The segment at 1–338 (MNNKNKITHT…SQDLPLNISR (338 aa)) is a; substrate-binding. Residues 339 to 552 (EILQDSSITH…TNDMSTQMAK (214 aa)) form a b region. The tract at residues 553–624 (IFSAAGQPIP…IQRINNFFIS (72 aa)) is c.

Belongs to the heat shock protein 90 family. Homodimer.

The protein localises to the cytoplasm. Molecular chaperone. Has ATPase activity. The polypeptide is Chaperone protein HtpG (Buchnera aphidicola subsp. Cinara cedri (strain Cc)).